Reading from the N-terminus, the 74-residue chain is Protein YkgV (74 aa).

The polypeptide is Protein YkgV (Escherichia coli (strain K12)).